We begin with the raw amino-acid sequence, 500 residues long: NAD(P)H-quinone oxidoreductase chain 4, chloroplastic (500 aa).

15 consecutive transmembrane segments (helical) span residues 4–24 (FYWL…IALL), 35–55 (YTIC…CYHF), 80–100 (LGID…TTLA), 113–130 (LFHF…GSFS), 134–154 (LLLF…LLSM), 167–187 (FILY…GMGL), 208–228 (ALEI…SPII), 242–262 (HYST…YGLV), 274–294 (SIFS…AALT), 305–325 (IAYS…SITD), 330–350 (GAIL…FLAG), 364–384 (MGGI…FSMA), 386–406 (LALP…GIIT), 416–436 (ILIT…SLSM), and 462–482 (IFIF…PDFV).

The protein belongs to the complex I subunit 4 family.

It is found in the plastid. The protein resides in the chloroplast thylakoid membrane. It catalyses the reaction a plastoquinone + NADH + (n+1) H(+)(in) = a plastoquinol + NAD(+) + n H(+)(out). It carries out the reaction a plastoquinone + NADPH + (n+1) H(+)(in) = a plastoquinol + NADP(+) + n H(+)(out). This Nymphaea alba (White water-lily) protein is NAD(P)H-quinone oxidoreductase chain 4, chloroplastic.